The chain runs to 304 residues: MTTEQEFEKVELTADGGVIKTILKKGDEGEENIPKKGNEVTVHYVGKLESTGKVFDSSFDRNVPFKFHLEQGEVIKGWDICVSSMRKNEKCLVRIESMYGYGDEGCGESIPGNSVLLFEIELLSFREAKKSIYDYTDEEKVQSAFDIKEEGNEFFKKNEINEAIVKYKEALDFFIHTEEWDDQILLDKKKNIEISCNLNLATCYNKNKDYPKAIDHASKVLKIDKNNVKALYKLGVANMYFGFLEEAKENLYKAASLNPNNLDIRNSYELCVNKLKEARKKDKLTFGGMFDKGPLYEEKKNSAN.

A PPIase FKBP-type domain is found at 37-126 (GNEVTVHYVG…LFEIELLSFR (90 aa)). TPR repeat units follow at residues 144 to 177 (AFDI…FIHT), 194 to 227 (ISCN…DKNN), and 228 to 261 (VKAL…NPNN).

The protein belongs to the FKBP-type PPIase family. Homodimer. Interacts (via TPR repeats) with HSP90 (probably via MEEVD motif).

Its subcellular location is the cytoplasm. The protein localises to the nucleus. It carries out the reaction [protein]-peptidylproline (omega=180) = [protein]-peptidylproline (omega=0). Its activity is regulated as follows. Inhibited by FK506 and its derivates, such as ascomycin, and rapamycin. FK506 and rapamycin inhibit peptidylprolyl isomerase activity but not chaperone activity. Inhibited by N-(2-ethyl-phenyl)-2-(3H-imidazao [4, 5-b] pyridin-2-yl-sulfanyl)-acetamide (D44). Not inhibited by cyclosporin A. Inhibition of calcineurin phosphatase activity is enhanced by FK506. Has peptidylprolyl isomerase (PPIase) and co-chaperone activities. Assists protein folding by catalyzing the peptidyl conversion of cis and trans rotamers of the prolyl amide bond of protein substrates. Inhibits calcineurin phosphatase activity in vitro. Plays an essential role in merozoite egress from host erythrocytes. This is Peptidyl-prolyl cis-trans isomerase FKBP35 from Plasmodium falciparum (isolate 3D7).